The following is a 477-amino-acid chain: PTS system glucose-specific EIICB component (477 aa).

The Cytoplasmic segment spans residues 1–14 (MFKNAFANLQKVGK). The PTS EIIC type-1 domain occupies 1-388 (MFKNAFANLQ…LDLKTPGRED (388 aa)). The helical transmembrane segment at 15–35 (SLMLPVSVLPIAGILLGVGSA) threads the bilayer. At 36–50 (NFSWLPAVVSHVMAE) the chain is on the periplasmic side. Residues 51–71 (AGGSVFANMPLIFAIGVALGF) traverse the membrane as a helical segment. Topologically, residues 72–79 (TNNDGVSA) are cytoplasmic. The helical transmembrane segment at 80–100 (LAAVVAYGIMVKTMAVVAPLV) threads the bilayer. The Periplasmic segment spans residues 101 to 111 (LHLPAEEIASK). A helical transmembrane segment spans residues 112–132 (HLADTGVLGGIISGAIAAYMF). Over 133–151 (NRFYRIKLPEYLGFFAGKR) the chain is Cytoplasmic. A helical membrane pass occupies residues 152 to 172 (FVPIISGLAAIFTGVVLSFIW). The Periplasmic segment spans residues 173–190 (PPIGSAIQTFSQWAAYQN). The helical transmembrane segment at 191-211 (PVVAFGIYGFIERCLVPFGLH) threads the bilayer. At 212–249 (HIWNVPFQMQIGEYTNAAGQVFHGDIPRYMAGDPTAGK) the chain is on the cytoplasmic side. Residues 250–270 (LSGGFLFKMYGLPAAAIAIWH) form a helical membrane-spanning segment. The Periplasmic portion of the chain corresponds to 271–279 (SAKPENRAK). The helical transmembrane segment at 280-300 (VGGIMISAALTSFLTGITEPI) threads the bilayer. At 301–309 (EFSFMFVAP) the chain is on the cytoplasmic side. Residues 310–330 (ILYIIHAILAGLAFPICILLG) form a helical membrane-spanning segment. Over 331 to 355 (MRDGTSFSHGLIDFIVLSGNSSKLW) the chain is Periplasmic. A helical membrane pass occupies residues 356 to 376 (LFPIVGIGYAIVYYTIFRVLI). Residues 377–477 (KALDLKTPGR…TEMDEYIRNH (101 aa)) are Cytoplasmic-facing. In terms of domain architecture, PTS EIIB type-1 spans 399–477 (SEMAPALVAA…TEMDEYIRNH (79 aa)). Cys421 (phosphocysteinsyse intermediate; for EIIB activity) is an active-site residue. At Cys421 the chain carries Phosphocysteine.

The protein resides in the cell inner membrane. It carries out the reaction N(pros)-phospho-L-histidyl-[protein] + D-glucose(out) = D-glucose 6-phosphate(in) + L-histidyl-[protein]. Its function is as follows. The phosphoenolpyruvate-dependent sugar phosphotransferase system (sugar PTS), a major carbohydrate active transport system, catalyzes the phosphorylation of incoming sugar substrates concomitantly with their translocation across the cell membrane. The enzyme II complex composed of PtsG and Crr is involved in glucose transport. Also functions as a chemoreceptor monitoring the environment for changes in sugar concentration. In Escherichia coli O6:H1 (strain CFT073 / ATCC 700928 / UPEC), this protein is PTS system glucose-specific EIICB component (ptsG).